The following is a 296-amino-acid chain: Mycothiol acetyltransferase (296 aa).

2 consecutive N-acetyltransferase domains span residues 8 to 146 and 151 to 296; these read RSPE…PPVE and ISVR…GPPV. A 1D-myo-inositol 2-(L-cysteinylamino)-2-deoxy-alpha-D-glucopyranoside-binding site is contributed by E39. An acetyl-CoA-binding site is contributed by 76-78; sequence VVT. Residues E178, K220, and E228 each coordinate 1D-myo-inositol 2-(L-cysteinylamino)-2-deoxy-alpha-D-glucopyranoside. Residues 232–234 and 239–245 each bind acetyl-CoA; these read VGV and QGEGLGR. Residue Y266 coordinates 1D-myo-inositol 2-(L-cysteinylamino)-2-deoxy-alpha-D-glucopyranoside.

This sequence belongs to the acetyltransferase family. MshD subfamily. In terms of assembly, monomer.

It catalyses the reaction 1D-myo-inositol 2-(L-cysteinylamino)-2-deoxy-alpha-D-glucopyranoside + acetyl-CoA = mycothiol + CoA + H(+). Functionally, catalyzes the transfer of acetyl from acetyl-CoA to desacetylmycothiol (Cys-GlcN-Ins) to form mycothiol. This Kytococcus sedentarius (strain ATCC 14392 / DSM 20547 / JCM 11482 / CCUG 33030 / NBRC 15357 / NCTC 11040 / CCM 314 / 541) (Micrococcus sedentarius) protein is Mycothiol acetyltransferase.